A 75-amino-acid polypeptide reads, in one-letter code: MMKLMLFSIIVILFSLIGSIHGADVPGNYPLDSSDDTYLCAPLGENPSCIQICRKHGVKYGYCYAFQCWCEYFGR.

The signal sequence occupies residues 1-22 (MMKLMLFSIIVILFSLIGSIHG). One can recognise an LCN-type CS-alpha/beta domain in the interval 25–75 (VPGNYPLDSSDDTYLCAPLGENPSCIQICRKHGVKYGYCYAFQCWCEYFGR). 3 cysteine pairs are disulfide-bonded: Cys-40–Cys-63, Cys-49–Cys-68, and Cys-53–Cys-70.

This sequence belongs to the long (3 C-C) scorpion toxin superfamily. In terms of tissue distribution, expressed by the venom gland.

Its subcellular location is the secreted. Its function is as follows. Probable neurotoxin that inhibits ion channels. This is Toxin-like peptide AaF1CA7 from Androctonus australis (Sahara scorpion).